The primary structure comprises 400 residues: MDSSAVPTNASNCTDALAHSSCSPARSPGSWVNLSHLDGNLSDPCGPNRTDLGGRDSLCPPTGSPSMITAITIMALYSIVCVVGLFGNFLVMYVIVRYTKMKTATNIYIFNLALADALVTSTLPFQSVNYLMGTWPFGTILCKIVISIDYYNMSTSIFTLCTMSVDRYIAVCHPVKALDFRTPRNAKIINVCNWILSSAIGLPVMFMATTKYRQGSIDCTLTFSHPSWYWENLLKICVFIFAFIMPVLIITVCYGLMILRLKSVRMLSGSKEKDRNLRRITRMVLVVVAVFIICWTPIHIYVIIKALVTIPETTFQTVSWHFCIALGYTNSCLNPVLYAFLDEDFKRCFREFCIPTSSNIEQQNSTRIRQNTRDHPSTANTVDRTNHQLENLEAETAPLP.

Residues 1-68 (MDSSAVPTNA…CPPTGSPSMI (68 aa)) are Extracellular-facing. N-linked (GlcNAc...) asparagine glycans are attached at residues asparagine 9, asparagine 12, asparagine 33, asparagine 40, and asparagine 48. A helical transmembrane segment spans residues 69 to 93 (TAITIMALYSIVCVVGLFGNFLVMY). The Cytoplasmic segment spans residues 94–106 (VIVRYTKMKTATN). Residues 107–131 (IYIFNLALADALVTSTLPFQSVNYL) traverse the membrane as a helical segment. At 132–142 (MGTWPFGTILC) the chain is on the extracellular side. A disulfide bridge links cysteine 142 with cysteine 219. A helical transmembrane segment spans residues 143–165 (KIVISIDYYNMSTSIFTLCTMSV). At 166–185 (DRYIAVCHPVKALDFRTPRN) the chain is on the cytoplasmic side. Phosphotyrosine is present on tyrosine 168. A helical transmembrane segment spans residues 186–207 (AKIINVCNWILSSAIGLPVMFM). The Extracellular segment spans residues 208–230 (ATTKYRQGSIDCTLTFSHPSWYW). A helical membrane pass occupies residues 231–255 (ENLLKICVFIFAFIMPVLIITVCYG). The Cytoplasmic segment spans residues 256 to 283 (LMILRLKSVRMLSGSKEKDRNLRRITRM). The chain crosses the membrane as a helical span at residues 284 to 306 (VLVVVAVFIICWTPIHIYVIIKA). Topologically, residues 307–314 (LVTIPETT) are extracellular. A helical transmembrane segment spans residues 315-338 (FQTVSWHFCIALGYTNSCLNPVLY). The short motif at 334-338 (NPVLY) is the NPxxY; plays a role in stabilizing the activated conformation of the receptor element. Residues 339 to 400 (AFLDEDFKRC…NLEAETAPLP (62 aa)) lie on the Cytoplasmic side of the membrane. The S-palmitoyl cysteine moiety is linked to residue cysteine 353. Residues 364-386 (NSTRIRQNTRDHPSTANTVDRTN) are disordered. Phosphoserine is present on serine 365. At threonine 372 the chain carries Phosphothreonine. A Phosphoserine modification is found at serine 377. Threonine 396 is modified (phosphothreonine).

It belongs to the G-protein coupled receptor 1 family. In terms of assembly, forms homooligomers and heterooligomers with other GPCRs, such as OPRD1, OPRK1, OPRL1, NPFFR2, ADRA2A, SSTR2, CNR1 and CCR5 (probably in dimeric forms). Interacts with heterotrimeric G proteins; interaction with a heterotrimeric complex containing GNAI1, GNB1 and GNG2 stabilizes the active conformation of the receptor and increases its affinity for endomorphin-2, the synthetic opioid peptide DAMGO and for morphinan agonists. Interacts with PPL; the interaction disrupts agonist-mediated G-protein activation. Interacts (via C-terminus) with DNAJB4 (via C-terminus). Interacts with calmodulin; the interaction inhibits the constitutive activity of OPRM1; it abolishes basal and attenuates agonist-stimulated G-protein coupling. Interacts with FLNA, PLD2, RANBP9 and WLS and GPM6A. Interacts with RTP4. Interacts with SYP and GNAS. Interacts with RGS9, RGS17, RGS20, RGS4, PPP1R9B and HINT1. Post-translationally, phosphorylated. Differentially phosphorylated in basal and agonist-induced conditions. Agonist-mediated phosphorylation modulates receptor internalization. Phosphorylated by GRK2 in a agonist-dependent manner. Phosphorylation at Tyr-168 requires receptor activation, is dependent on non-receptor protein tyrosine kinase Src and results in a decrease in agonist efficacy by reducing G-protein coupling efficiency. Phosphorylated on tyrosine residues; the phosphorylation is involved in agonist-induced G-protein-independent receptor down-regulation. Phosphorylation at Ser-377 is involved in G-protein-dependent but not beta-arrestin-dependent activation of the ERK pathway. Ubiquitinated. A basal ubiquitination seems not to be related to degradation. Ubiquitination is increased upon formation of OPRM1:OPRD1 oligomers leading to proteasomal degradation; the ubiquitination is diminished by RTP4.

The protein resides in the cell membrane. The protein localises to the cell projection. It localises to the axon. It is found in the perikaryon. Its subcellular location is the dendrite. The protein resides in the endosome. Functionally, receptor for endogenous opioids such as beta-endorphin and endomorphin. Receptor for natural and synthetic opioids including morphine, heroin, DAMGO, fentanyl, etorphine, buprenorphin and methadone. Also activated by enkephalin peptides, such as Met-enkephalin or Met-enkephalin-Arg-Phe, with higher affinity for Met-enkephalin-Arg-Phe. Agonist binding to the receptor induces coupling to an inactive GDP-bound heterotrimeric G-protein complex and subsequent exchange of GDP for GTP in the G-protein alpha subunit leading to dissociation of the G-protein complex with the free GTP-bound G-protein alpha and the G-protein beta-gamma dimer activating downstream cellular effectors. The agonist- and cell type-specific activity is predominantly coupled to pertussis toxin-sensitive G(i) and G(o) G alpha proteins, GNAI1, GNAI2, GNAI3 and GNAO1, and to a lesser extent to pertussis toxin-insensitive G alpha proteins GNAZ and GNA15. They mediate an array of downstream cellular responses, including inhibition of adenylate cyclase activity and both N-type and L-type calcium channels, activation of inward rectifying potassium channels, mitogen-activated protein kinase (MAPK), phospholipase C (PLC), phosphoinositide/protein kinase (PKC), phosphoinositide 3-kinase (PI3K) and regulation of NF-kappa-B. Also couples to adenylate cyclase stimulatory G alpha proteins. The selective temporal coupling to G-proteins and subsequent signaling can be regulated by RGSZ proteins, such as RGS9, RGS17 and RGS4. Phosphorylation by members of the GPRK subfamily of Ser/Thr protein kinases and association with beta-arrestins is involved in short-term receptor desensitization. Beta-arrestins associate with the GPRK-phosphorylated receptor and uncouple it from the G-protein thus terminating signal transduction. The phosphorylated receptor is internalized through endocytosis via clathrin-coated pits which involves beta-arrestins. The activation of the ERK pathway occurs either in a G-protein-dependent or a beta-arrestin-dependent manner and is regulated by agonist-specific receptor phosphorylation. Acts as a class A G-protein coupled receptor (GPCR) which dissociates from beta-arrestin at or near the plasma membrane and undergoes rapid recycling. Receptor down-regulation pathways are varying with the agonist and occur dependent or independent of G-protein coupling. Endogenous ligands induce rapid desensitization, endocytosis and recycling. Heterooligomerization with other GPCRs can modulate agonist binding, signaling and trafficking properties. Involved in neurogenesis. The chain is Mu-type opioid receptor (OPRM1) from Macaca mulatta (Rhesus macaque).